A 256-amino-acid polypeptide reads, in one-letter code: Hydroxyacylglutathione hydrolase (256 aa).

The Zn(2+) site is built by histidine 53, histidine 55, aspartate 57, histidine 58, histidine 111, aspartate 128, and histidine 166.

Belongs to the metallo-beta-lactamase superfamily. Glyoxalase II family. As to quaternary structure, monomer. It depends on Zn(2+) as a cofactor.

It catalyses the reaction an S-(2-hydroxyacyl)glutathione + H2O = a 2-hydroxy carboxylate + glutathione + H(+). It functions in the pathway secondary metabolite metabolism; methylglyoxal degradation; (R)-lactate from methylglyoxal: step 2/2. Functionally, thiolesterase that catalyzes the hydrolysis of S-D-lactoyl-glutathione to form glutathione and D-lactic acid. The protein is Hydroxyacylglutathione hydrolase of Thiobacillus denitrificans (strain ATCC 25259 / T1).